The primary structure comprises 224 residues: Octanoyltransferase (224 aa).

The BPL/LPL catalytic domain occupies 38-213; the sequence is AETTDEVWLL…QFVRAAGFQS (176 aa). Substrate contacts are provided by residues 77–84, 144–146, and 157–159; these read RGGQVTYH, SLG, and GLA. C175 serves as the catalytic Acyl-thioester intermediate.

It belongs to the LipB family.

It localises to the cytoplasm. It carries out the reaction octanoyl-[ACP] + L-lysyl-[protein] = N(6)-octanoyl-L-lysyl-[protein] + holo-[ACP] + H(+). The protein operates within protein modification; protein lipoylation via endogenous pathway; protein N(6)-(lipoyl)lysine from octanoyl-[acyl-carrier-protein]: step 1/2. Functionally, catalyzes the transfer of endogenously produced octanoic acid from octanoyl-acyl-carrier-protein onto the lipoyl domains of lipoate-dependent enzymes. Lipoyl-ACP can also act as a substrate although octanoyl-ACP is likely to be the physiological substrate. The sequence is that of Octanoyltransferase from Hahella chejuensis (strain KCTC 2396).